We begin with the raw amino-acid sequence, 58 residues long: MSNMLEITLIKSTIGATEKQCAVVRGLGLRRLHQTVTLQDSPETRGMISKINHMLKVK.

Belongs to the universal ribosomal protein uL30 family. Part of the 50S ribosomal subunit.

The sequence is that of Large ribosomal subunit protein uL30 from Trichlorobacter lovleyi (strain ATCC BAA-1151 / DSM 17278 / SZ) (Geobacter lovleyi).